The chain runs to 647 residues: Threonine--tRNA ligase (647 aa).

One can recognise a TGS domain in the interval 1-61 (MINITFPDGA…TEDGSIEIVT (61 aa)). The interval 242–540 (DHRKLGKELD…LIENYKGAFP (299 aa)) is catalytic. Zn(2+) is bound by residues cysteine 336, histidine 387, and histidine 517.

Belongs to the class-II aminoacyl-tRNA synthetase family. Homodimer. Zn(2+) is required as a cofactor.

The protein localises to the cytoplasm. The catalysed reaction is tRNA(Thr) + L-threonine + ATP = L-threonyl-tRNA(Thr) + AMP + diphosphate + H(+). Its function is as follows. Catalyzes the attachment of threonine to tRNA(Thr) in a two-step reaction: L-threonine is first activated by ATP to form Thr-AMP and then transferred to the acceptor end of tRNA(Thr). Also edits incorrectly charged L-seryl-tRNA(Thr). This chain is Threonine--tRNA ligase, found in Streptococcus pneumoniae serotype 2 (strain D39 / NCTC 7466).